We begin with the raw amino-acid sequence, 162 residues long: Nitric oxide synthase, inducible (162 aa).

The segment covering 24–37 has biased composition (polar residues); sequence LQYHSLSKQQNESP. The disordered stretch occupies residues 24 to 65; sequence LQYHSLSKQQNESPQPLVGTGKKSPESLVKPDATPLSSPRHV. Zn(2+)-binding residues include C90 and C95. S98 contacts (6R)-L-erythro-5,6,7,8-tetrahydrobiopterin. L-arginine is bound at residue E132. Residue H160 coordinates FAD.

The protein belongs to the NOS family. In terms of assembly, homodimer. Interacts with NHERF1. Interacts with GAPDH; induced by oxidatively-modified low-densitity lipoprotein (LDL(ox)). Interacts with S100A8 and S100A9 to form the iNOS-S100A8/9 transnitrosylase complex. Interacts with SPSB1, SPSB2 and SPSB4. Interacts with ELOC and CUL5 in the presence of SPSB1 or SPSB2 or SPSB4. Forms a complex with ASL, ASS1 and HSP90AA1; the complex regulates cell-autonomous L-arginine synthesis and citrulline recycling while channeling extracellular L-arginine to nitric oxide synthesis pathway. Heme b is required as a cofactor. It depends on FAD as a cofactor. Requires FMN as cofactor. The cofactor is (6R)-L-erythro-5,6,7,8-tetrahydrobiopterin. In terms of processing, polyubiquitinated; mediated by SPSB1, SPSB2 and SPSB4, leading to proteasomal degradation.

It is found in the cytoplasm. The protein resides in the cytosol. The catalysed reaction is 2 L-arginine + 3 NADPH + 4 O2 + H(+) = 2 L-citrulline + 2 nitric oxide + 3 NADP(+) + 4 H2O. With respect to regulation, regulated by calcium/calmodulin. Produces nitric oxide (NO) which is a messenger molecule with diverse functions throughout the body. In macrophages, NO mediates tumoricidal and bactericidal actions. Also has nitrosylase activity and mediates cysteine S-nitrosylation of cytoplasmic target proteins such PTGS2/COX2. As component of the iNOS-S100A8/9 transnitrosylase complex involved in the selective inflammatory stimulus-dependent S-nitrosylation of GAPDH implicated in regulation of the GAIT complex activity and probably multiple targets including ANXA5, EZR, MSN and VIM. Involved in inflammation, enhances the synthesis of pro-inflammatory mediators such as IL6 and IL8. The protein is Nitric oxide synthase, inducible (NOS2) of Macaca mulatta (Rhesus macaque).